A 687-amino-acid chain; its full sequence is DNA-directed RNA polymerase subunit beta' (687 aa).

The Zn(2+) site is built by Cys-76, Cys-78, Cys-94, and Cys-97. Mg(2+) contacts are provided by Asp-496, Asp-498, and Asp-500.

It belongs to the RNA polymerase beta' chain family. RpoC1 subfamily. As to quaternary structure, in plastids the minimal PEP RNA polymerase catalytic core is composed of four subunits: alpha, beta, beta', and beta''. When a (nuclear-encoded) sigma factor is associated with the core the holoenzyme is formed, which can initiate transcription. The cofactor is Mg(2+). Zn(2+) is required as a cofactor.

Its subcellular location is the plastid. It localises to the chloroplast. The catalysed reaction is RNA(n) + a ribonucleoside 5'-triphosphate = RNA(n+1) + diphosphate. In terms of biological role, DNA-dependent RNA polymerase catalyzes the transcription of DNA into RNA using the four ribonucleoside triphosphates as substrates. This Ipomoea purpurea (Common morning glory) protein is DNA-directed RNA polymerase subunit beta'.